The chain runs to 428 residues: E3 ubiquitin-protein ligase RNF128 (428 aa).

The N-terminal stretch at 1 to 38 (MGPPPGAGVSCRGGCGFSRLLAWCFLLALSPQAPGSRG) is a signal peptide. N-linked (GlcNAc...) asparagine glycans are attached at residues asparagine 48, asparagine 59, and asparagine 101. In terms of domain architecture, PA spans 75 to 183 (SPLEPVAGVL…LKGTKILQSI (109 aa)). A helical transmembrane segment spans residues 208–228 (IFFVSVSFFIITAATVGYFIF). The RING-type; atypical zinc finger occupies 277–318 (CAVCIELYKPNDLVRILTCNHIFHKTCVDPWLLEHRTCPMCK). A disordered region spans residues 346-428 (ISNSASSHEE…QETAVREIKS (83 aa)). The span at 360 to 371 (ETASSGYASVQG) shows a compositional bias: polar residues.

Auto-ubiquitinated. Controls the development of T-cell clonal anergy by ubiquitination.

It is found in the cytoplasm. The protein resides in the endomembrane system. Its subcellular location is the cytoskeleton. It localises to the perinuclear region. It catalyses the reaction S-ubiquitinyl-[E2 ubiquitin-conjugating enzyme]-L-cysteine + [acceptor protein]-L-lysine = [E2 ubiquitin-conjugating enzyme]-L-cysteine + N(6)-ubiquitinyl-[acceptor protein]-L-lysine.. It functions in the pathway protein modification; protein ubiquitination. In terms of biological role, E3 ubiquitin-protein ligase that catalyzes 'Lys-27', 'Lys-48'- or 'Lys-63'-linked polyubiquitin chains formation and plays a role in different biological processes such as modulation of immune response, cytoskeletal dynamics or protein homeostasis. Inhibits IL2 and IL4 transcription, thereby playing an important role in the induction of the anergic phenotype, a long-term stable state of T-lymphocyte unresponsiveness to antigenic stimulation associated with the blockade of interleukin production. Ubiquitinates ARPC5 with 'Lys-48' linkages and COR1A with 'Lys-63' linkages leading to their degradation, down-regulation of these cytoskeletal components results in impaired lamellipodium formation and reduced accumulation of F-actin at the immunological synapse. Functions in the patterning of the dorsal ectoderm; sensitizes ectoderm to respond to neural-inducing signals. Plays a positive role in innate immune response by promoting 'Lys-63'-linked ubiquitination of TBK1 after RNA- or DNA-virus infection. Regulates alveolar macrophage activation and neutrophil infiltration by interacting with TLR4, targeting it for degradation, and inhibiting NF-kappa-B activation, hence decreasing pro-inflammatory cytokines. Negatively regulates the IL-3/STAT5 signaling pathway by facilitating 'Lys-27'-linked polyubiquitination of IL3RA leading to its degradation via lysosomal pathway. Directly regulates the N-glycosylation process in the endoplasmic reticulum by targeting the glycosyl-transferase RPN1 for ubiquitination and degradation. Other substrates targeted for degradation by RNF128 include transmembrane proteins CD40L, CD83 or the tetraspanin CD151. The polypeptide is E3 ubiquitin-protein ligase RNF128 (RNF128) (Homo sapiens (Human)).